A 424-amino-acid chain; its full sequence is Hemagglutinin-esterase (424 aa).

Signal peptides lie at residues 1-16 and 1-18; these read MFLLLRFVLVSCIIGS and MFLLLRFVLVSCIIGSLG. An esterase domain 1 region spans residues 7-127; sequence FVLVSCIIGS…SNDIWMQNKG (121 aa). The Virion surface segment spans residues 17–392; it reads LGFDNPPTNV…PICVYDPLPL (376 aa). The Nucleophile role is filled by Ser40. The cysteines at positions 44 and 65 are disulfide-linked. Asn54, Asn89, Asn153, Asn236, and Asn301 each carry an N-linked (GlcNAc...) asparagine; by host glycan. Disulfide bonds link Cys113–Cys162, Cys197–Cys276, and Cys205–Cys249. The interval 128-266 is receptor binding; sequence LFYTQVYKNM…GNYLAISNEL (139 aa). Residues 267-379 are esterase domain 2; it reads LLTVPTKAIC…RCPTAADINT (113 aa). Residues Cys307 and Cys312 are joined by a disulfide bond. N-linked (GlcNAc...) asparagine; by host glycosylation is present at Asn316. Active-site charge relay system residues include Asp326 and His329. Cys347 and Cys371 are joined by a disulfide. N-linked (GlcNAc...) asparagine; by host glycosylation occurs at Asn358. The helical transmembrane segment at 393 to 413 threads the bilayer; the sequence is ILLGILLGVAVIIIVVLLLYF. Residues 414-424 are Intravirion-facing; that stretch reads MVDNGTRLHDA. Asn417 is a glycosylation site (N-linked (GlcNAc...) asparagine; by host).

It belongs to the influenza type C/coronaviruses hemagglutinin-esterase family. As to quaternary structure, homodimer; disulfide-linked. Forms a complex with the M protein in the pre-Golgi. Associates then with S-M complex to form a ternary complex S-M-HE. In terms of processing, N-glycosylated in the host RER.

The protein resides in the virion membrane. Its subcellular location is the host cell membrane. The enzyme catalyses N-acetyl-9-O-acetylneuraminate + H2O = N-acetylneuraminate + acetate + H(+). It carries out the reaction N-acetyl-4-O-acetylneuraminate + H2O = N-acetylneuraminate + acetate + H(+). Its function is as follows. Structural protein that makes short spikes at the surface of the virus. Contains receptor binding and receptor-destroying activities. Mediates de-O-acetylation of N-acetyl-4-O-acetylneuraminic acid, which is probably the receptor determinant recognized by the virus on the surface of erythrocytes and susceptible cells. This receptor-destroying activity is important for virus release as it probably helps preventing self-aggregation and ensures the efficient spread of the progeny virus from cell to cell. May serve as a secondary viral attachment protein for initiating infection, the spike protein being the major one. May become a target for both the humoral and the cellular branches of the immune system. The polypeptide is Hemagglutinin-esterase (Bos taurus (Bovine)).